The sequence spans 361 residues: MSIRLRAEMADLPAYAPGKTVPGAIKIASNETVHGPLPSVREAILKATDLINRYPDNGYLDLRERLAKHVNFAPENISVGCGSVSLCQQLIQITSSVGDEVLFAWRSFEIYPLQVRTAGATPVAVALRDHTHDLDAMLAAITDRTRLIFVCNPNNPTSTVVDPGELARFVAAVPPHILVVLDEAYVEYIRDGLLPDSLGLVREHRNVVVLRTFSKAYGLAGLRVGYAVADPEIVTALGKVYVPFSATSVSQAAAIACLDAADELLARTDAVVAERTRVSDALRAAGYTLPPSQANFVWLPLAERTLDFVARAADNRIIVRPYGEDGVRVTIGAPHENDAFLDFAQRWIAPGGAGPRTGDSA.

Lys-215 carries the N6-(pyridoxal phosphate)lysine modification.

It belongs to the class-II pyridoxal-phosphate-dependent aminotransferase family. As to quaternary structure, homodimer. It depends on pyridoxal 5'-phosphate as a cofactor.

It catalyses the reaction an aromatic L-alpha-amino acid + 2-oxoglutarate = an aromatic oxo-acid + L-glutamate. In terms of biological role, aminotransferase that catalyzes the conversion of aromatic amino acids and 2-oxoglutarate into corresponding aromatic oxo acids and L-glutamate. The chain is Aromatic amino acid aminotransferase from Mycolicibacterium smegmatis (strain ATCC 700084 / mc(2)155) (Mycobacterium smegmatis).